Reading from the N-terminus, the 425-residue chain is Serine--tRNA ligase (425 aa).

Position 233–235 (233–235 (TAE)) interacts with L-serine. Residue 264–266 (RRE) participates in ATP binding. An L-serine-binding site is contributed by glutamate 287. An ATP-binding site is contributed by 351-354 (EISS). Position 387 (serine 387) interacts with L-serine.

The protein belongs to the class-II aminoacyl-tRNA synthetase family. Type-1 seryl-tRNA synthetase subfamily. Homodimer. The tRNA molecule binds across the dimer.

It localises to the cytoplasm. It catalyses the reaction tRNA(Ser) + L-serine + ATP = L-seryl-tRNA(Ser) + AMP + diphosphate + H(+). The catalysed reaction is tRNA(Sec) + L-serine + ATP = L-seryl-tRNA(Sec) + AMP + diphosphate + H(+). The protein operates within aminoacyl-tRNA biosynthesis; selenocysteinyl-tRNA(Sec) biosynthesis; L-seryl-tRNA(Sec) from L-serine and tRNA(Sec): step 1/1. Its function is as follows. Catalyzes the attachment of serine to tRNA(Ser). Is also able to aminoacylate tRNA(Sec) with serine, to form the misacylated tRNA L-seryl-tRNA(Sec), which will be further converted into selenocysteinyl-tRNA(Sec). The protein is Serine--tRNA ligase of Thermotoga maritima (strain ATCC 43589 / DSM 3109 / JCM 10099 / NBRC 100826 / MSB8).